Consider the following 574-residue polypeptide: Sulfate adenylyltransferase (574 aa).

The segment at 1 to 170 (MANTPHGGVL…LEAINRLEHY (170 aa)) is N-terminal. Residues 171–395 (DFLDLRFTPS…LREENPLPAE (225 aa)) form a catalytic region. Sulfate is bound at residue glutamine 198. Residues 198 to 201 (QTRN) and 292 to 295 (GRDH) each bind ATP. Residues threonine 199, arginine 200, and asparagine 201 contribute to the active site. Residue arginine 200 participates in sulfate binding. Alanine 296 contributes to the sulfate binding site. Methionine 334 provides a ligand contact to ATP. Residues 396–574 (KGFTVFMTGY…LESNGLLDRL (179 aa)) form an allosteric regulation domain; adenylyl-sulfate kinase-like region. 3'-phosphoadenylyl sulfate-binding positions include 435-438 (ENVR), arginine 452, 478-479 (IA), and lysine 516.

It in the N-terminal section; belongs to the sulfate adenylyltransferase family. This sequence in the C-terminal section; belongs to the APS kinase family. In terms of assembly, homohexamer. Dimer of trimers.

The protein localises to the cytoplasm. It catalyses the reaction sulfate + ATP + H(+) = adenosine 5'-phosphosulfate + diphosphate. It functions in the pathway sulfur metabolism; hydrogen sulfide biosynthesis; sulfite from sulfate: step 1/3. Its activity is regulated as follows. Allosterically inhibited by 3'-phosphoadenosine 5'-phosphosulfate (PAPS). Catalyzes the first intracellular reaction of sulfate assimilation, forming adenosine-5'-phosphosulfate (APS) from inorganic sulfate and ATP. Plays an important role in sulfate activation as a component of the biosynthesis pathway of sulfur-containing amino acids. This Gibberella zeae (strain ATCC MYA-4620 / CBS 123657 / FGSC 9075 / NRRL 31084 / PH-1) (Wheat head blight fungus) protein is Sulfate adenylyltransferase.